The primary structure comprises 580 residues: Extracellular protease (580 aa).

The first 32 residues, 1–32 (MSTASLRKRTGSLTILGASALTSLLLAMPAFA), serve as a signal peptide directing secretion. Positions 33–136 (GEVYLDGLAT…VEVDQILHAT (104 aa)) are excised as a propeptide. The Peptidase S8 domain maps to 147–465 (QWAFGTTNAG…AGIVNADAAV (319 aa)). Active-site charge relay system residues include Asp177 and His237. 2 disulfide bridges follow: Cys225/Cys273 and Cys315/Cys352. Catalysis depends on Ser409, which acts as the Charge relay system. A disulfide bridge connects residues Cys450 and Cys454.

The protein belongs to the peptidase S8 family.

It localises to the secreted. The sequence is that of Extracellular protease from Xanthomonas campestris pv. campestris (strain ATCC 33913 / DSM 3586 / NCPPB 528 / LMG 568 / P 25).